A 715-amino-acid polypeptide reads, in one-letter code: D-ribulokinase YDR109C (715 aa).

The segment at 1-27 (MKSRKRQNNMQNETREPAVLSSQETSI) is disordered.

It belongs to the FGGY kinase family.

It carries out the reaction D-ribulose + ATP = D-ribulose 5-phosphate + ADP + H(+). Its pathway is carbohydrate metabolism; pentose and glucuronate interconversion. Catalyzes ATP-dependent phosphorylation of D-ribulose at C-5 to form D-ribulose 5-phosphate. Postulated to function in a metabolite repair mechanism by preventing toxic accumulation of free D-ribulose formed by non-specific phosphatase activities. Alternatively, may play a role in regulating D-ribulose 5-phosphate recycling in the pentose phosphate pathway. This Saccharomyces cerevisiae (strain ATCC 204508 / S288c) (Baker's yeast) protein is D-ribulokinase YDR109C.